The chain runs to 364 residues: Nicotinate-nucleotide--dimethylbenzimidazole phosphoribosyltransferase (364 aa).

Residue Glu-332 is the Proton acceptor of the active site.

This sequence belongs to the CobT family.

It carries out the reaction 5,6-dimethylbenzimidazole + nicotinate beta-D-ribonucleotide = alpha-ribazole 5'-phosphate + nicotinate + H(+). It participates in nucleoside biosynthesis; alpha-ribazole biosynthesis; alpha-ribazole from 5,6-dimethylbenzimidazole: step 1/2. Functionally, catalyzes the synthesis of alpha-ribazole-5'-phosphate from nicotinate mononucleotide (NAMN) and 5,6-dimethylbenzimidazole (DMB). The protein is Nicotinate-nucleotide--dimethylbenzimidazole phosphoribosyltransferase of Salinispora tropica (strain ATCC BAA-916 / DSM 44818 / JCM 13857 / NBRC 105044 / CNB-440).